The primary structure comprises 274 residues: Bis(5'-nucleosyl)-tetraphosphatase, symmetrical (274 aa).

Belongs to the Ap4A hydrolase family.

The catalysed reaction is P(1),P(4)-bis(5'-adenosyl) tetraphosphate + H2O = 2 ADP + 2 H(+). Its function is as follows. Hydrolyzes diadenosine 5',5'''-P1,P4-tetraphosphate to yield ADP. This chain is Bis(5'-nucleosyl)-tetraphosphatase, symmetrical, found in Shewanella sp. (strain ANA-3).